The following is a 698-amino-acid chain: Long-chain-fatty-acid--CoA ligase 1 (698 aa).

M1 carries the post-translational modification N-acetylmethionine. At Y9 the chain carries 3'-nitrotyrosine. Position 84 is a phosphotyrosine (Y84). Residue S135 is glycosylated (O-linked (GlcNAc) serine). An N6-acetyllysine mark is found at K356 and K386. S620 is subject to Phosphoserine. Residue K632 is modified to N6-acetyllysine.

Belongs to the ATP-dependent AMP-binding enzyme family. Requires Mg(2+) as cofactor.

The protein resides in the microsome membrane. It localises to the mitochondrion outer membrane. Its subcellular location is the peroxisome membrane. It is found in the endoplasmic reticulum membrane. It catalyses the reaction a long-chain fatty acid + ATP + CoA = a long-chain fatty acyl-CoA + AMP + diphosphate. The enzyme catalyses (5Z,8Z,11Z,14Z)-eicosatetraenoate + ATP + CoA = (5Z,8Z,11Z,14Z)-eicosatetraenoyl-CoA + AMP + diphosphate. The catalysed reaction is 3,7,11,15-tetramethylhexadecanoate + ATP + CoA = phytanoyl-CoA + AMP + diphosphate. It carries out the reaction hexadecanoate + ATP + CoA = hexadecanoyl-CoA + AMP + diphosphate. It catalyses the reaction (E)-hexadec-2-enoate + ATP + CoA = (2E)-hexadecenoyl-CoA + AMP + diphosphate. The enzyme catalyses 2,6,10,14-tetramethylpentadecanoate + ATP + CoA = pristanoyl-CoA + AMP + diphosphate. The catalysed reaction is 14,15-epoxy-(5Z,8Z,11Z)-eicosatrienoate + ATP + CoA = 14,15-epoxy-(5Z,8Z,11Z)-eicosatrienoyl-CoA + AMP + diphosphate. It carries out the reaction 5-hydroxy-(6E,8Z,11Z,14Z)-eicosatetraenoate + ATP + CoA = 5-hydroxy-(6E,8Z,11Z,14Z)-eicosatetraenoyl-CoA + AMP + diphosphate. It catalyses the reaction 12-hydroxy-(5Z,8Z,10E,14Z)-eicosatetraenoate + ATP + CoA = 12-hydroxy-(5Z,8Z,10E,14Z)-eicosatetraenoyl-CoA + AMP + diphosphate. The enzyme catalyses 15-hydroxy-(5Z,8Z,11Z,13E)-eicosatetraenoate + ATP + CoA = 15-hydroxy-(5Z,8Z,11Z,13E)-eicosatetraenoyl-CoA + AMP + diphosphate. The catalysed reaction is (9Z)-octadecenoate + ATP + CoA = (9Z)-octadecenoyl-CoA + AMP + diphosphate. With respect to regulation, inhibited at high temperature and by arachidonate. In terms of biological role, catalyzes the conversion of long-chain fatty acids to their active form acyl-CoAs for both synthesis of cellular lipids, and degradation via beta-oxidation. Preferentially uses palmitoleate, oleate and linoleate. Preferentially activates arachidonate than epoxyeicosatrienoic acids (EETs) or hydroxyeicosatrienoic acids (HETEs). This Cavia porcellus (Guinea pig) protein is Long-chain-fatty-acid--CoA ligase 1.